A 464-amino-acid polypeptide reads, in one-letter code: Trigger factor (464 aa).

The 82-residue stretch at 162 to 243 (GDFISIDLSA…VGTVKERELP (82 aa)) folds into the PPIase FKBP-type domain. The tract at residues 428–464 (GASVDTAELFGNGEADTEEAASTDEVASDSAEGEDQK) is disordered.

The protein belongs to the FKBP-type PPIase family. Tig subfamily.

The protein localises to the cytoplasm. The enzyme catalyses [protein]-peptidylproline (omega=180) = [protein]-peptidylproline (omega=0). Its function is as follows. Involved in protein export. Acts as a chaperone by maintaining the newly synthesized protein in an open conformation. Functions as a peptidyl-prolyl cis-trans isomerase. The sequence is that of Trigger factor from Rhodococcus opacus (strain B4).